A 288-amino-acid chain; its full sequence is Fatty acid-binding protein TM_1468 (288 aa).

A DegV domain is found at 3–283; that stretch reads VKILVDSTAD…PGTVGFGIEV (281 aa). Thr-63 and Ser-96 together coordinate hexadecanoate.

Monomer.

Binds long-chain fatty acids, such as palmitate, and may play a role in lipid transport or fatty acid metabolism. This is Fatty acid-binding protein TM_1468 from Thermotoga maritima (strain ATCC 43589 / DSM 3109 / JCM 10099 / NBRC 100826 / MSB8).